A 638-amino-acid polypeptide reads, in one-letter code: Plasma kallikrein (638 aa).

The signal sequence occupies residues 1-19 (MILFNRVGYFVSLFATVSC). Apple domains follow at residues 21 to 104 (CMTQ…LKQC), 111 to 194 (CHRD…LKSC), 201 to 284 (CPMD…LLTC), and 292 to 375 (CHSK…LRLC). Disulfide bonds link Cys-21–Cys-104, Cys-47–Cys-77, Cys-51–Cys-57, Cys-111–Cys-194, Cys-137–Cys-166, Cys-141–Cys-147, Cys-201–Cys-284, Cys-227–Cys-256, Cys-231–Cys-237, Cys-292–Cys-375, Cys-318–Cys-347, Cys-322–Cys-328, Cys-340–Cys-345, Cys-383–Cys-503, Cys-419–Cys-435, Cys-517–Cys-584, Cys-548–Cys-563, and Cys-574–Cys-602. The N-linked (GlcNAc...) asparagine glycan is linked to Asn-127. Asn-215 carries an N-linked (GlcNAc...) asparagine glycan. A glycan (N-linked (GlcNAc...) asparagine) is linked at Asn-308. In terms of domain architecture, Peptidase S1 spans 391–626 (IVGGTNASLG…YMDWILEKTQ (236 aa)). Residue Asn-396 is glycosylated (N-linked (GlcNAc...) asparagine). Catalysis depends on charge relay system residues His-434 and Asp-483. An N-linked (GlcNAc...) asparagine glycan is attached at Asn-494. The Charge relay system role is filled by Ser-578.

This sequence belongs to the peptidase S1 family. Plasma kallikrein subfamily. As to quaternary structure, forms a heterodimer with SERPINA5. The zymogen is activated by factor XIIa, which cleaves the molecule into a light chain, which contains the active site, and a heavy chain, which associates with HMW kininogen. These chains are linked by one or more disulfide bonds.

The protein resides in the secreted. The enzyme catalyses Cleaves selectively Arg-|-Xaa and Lys-|-Xaa bonds, including Lys-|-Arg and Arg-|-Ser bonds in (human) kininogen to release bradykinin.. Its activity is regulated as follows. Inhibited by SERPINA5. Functionally, the enzyme cleaves Lys-Arg and Arg-Ser bonds. It activates, in a reciprocal reaction, factor XII after its binding to a negatively charged surface. It also releases bradykinin from HMW kininogen and may also play a role in the renin-angiotensin system by converting prorenin into renin. In Mus musculus (Mouse), this protein is Plasma kallikrein (Klkb1).